The chain runs to 427 residues: Transcobalamin-2 (427 aa).

Positions 1–18 (MRHLGALLFLLGVLGALA) are cleaved as a signal peptide. 3 disulfides stabilise this stretch: C21/C267, C116/C309, and C165/C205. Residues Q104, 152–156 (TSYYQ), H190, 190–194 (HHSVD), N242, S245, Q291, and 395–397 (WQL) contribute to the cob(II)alamin site.

This sequence belongs to the eukaryotic cobalamin transport proteins family. Interacts with CD320 (via LDL-receptor class A domains).

Its subcellular location is the secreted. Primary vitamin B12-binding and transport protein. Delivers cobalamin to cells. The polypeptide is Transcobalamin-2 (TCN2) (Pongo abelii (Sumatran orangutan)).